Reading from the N-terminus, the 101-residue chain is NAD(P)H-quinone oxidoreductase subunit 4L, chloroplastic (101 aa).

3 consecutive transmembrane segments (helical) span residues 2–22 (MLEH…FGLI), 32–52 (MCLE…SHLF), and 61–81 (IFSI…LAIV).

This sequence belongs to the complex I subunit 4L family. In terms of assembly, NDH is composed of at least 16 different subunits, 5 of which are encoded in the nucleus.

The protein localises to the plastid. Its subcellular location is the chloroplast thylakoid membrane. It carries out the reaction a plastoquinone + NADH + (n+1) H(+)(in) = a plastoquinol + NAD(+) + n H(+)(out). The catalysed reaction is a plastoquinone + NADPH + (n+1) H(+)(in) = a plastoquinol + NADP(+) + n H(+)(out). NDH shuttles electrons from NAD(P)H:plastoquinone, via FMN and iron-sulfur (Fe-S) centers, to quinones in the photosynthetic chain and possibly in a chloroplast respiratory chain. The immediate electron acceptor for the enzyme in this species is believed to be plastoquinone. Couples the redox reaction to proton translocation, and thus conserves the redox energy in a proton gradient. In Piper cenocladum (Ant piper), this protein is NAD(P)H-quinone oxidoreductase subunit 4L, chloroplastic.